Consider the following 86-residue polypeptide: Putative regulatory protein Dvul_2085 (86 aa).

It belongs to the RemA family.

This chain is Putative regulatory protein Dvul_2085, found in Nitratidesulfovibrio vulgaris (strain DP4) (Desulfovibrio vulgaris).